We begin with the raw amino-acid sequence, 522 residues long: Cytochrome P450 monooxygenase sirB (522 aa).

Residues 22–42 (ASAILFCTLLTVFLFISQGTV) form a helical membrane-spanning segment. N-linked (GlcNAc...) asparagine glycosylation is present at Asn-191. The chain crosses the membrane as a helical span at residues 304 to 324 (VLHLSFAATGTVAILITHMIY). Position 462 (Cys-462) interacts with heme.

Belongs to the cytochrome P450 family. The cofactor is heme.

Its subcellular location is the membrane. It participates in mycotoxin biosynthesis. Cytochrome P450 monooxygenase; part of the gene cluster that mediates the biosynthesis of sirodesmin PL, an epipolythiodioxopiperazine (ETP) characterized by a disulfide bridged cyclic dipeptide and that acts as a phytotoxin which is involved in the blackleg didease of canola. SirD catalyzes the O-prenylation of L-tyrosine (L-Tyr) in the presence of dimethylallyl diphosphate (DMAPP) to yield 4-O-dimethylallyl-L-Tyr, and therefore represents probably the first pathway-specific enzyme in the biosynthesis of sirodesmin PL. 4-O-dimethylallyl-L-Tyr, then undergoes condensation with L-Ser in a reaction catalyzed by the non-ribosomal peptide synthase sirP to form the diketopiperazine (DKP) backbone. Further bishydroxylation of the DKP performed by the cytochrome P450 monooxygenase sirC leads to the production of the intermediate phomamide. This step is essential to form the reactive thiol group required for toxicity of sirodesmin PL. The next steps of sirodesmin biosynthesis are not well understood yet, but some predictions could be made from intermediate compounds identification. Phomamide is converted into phomalizarine via oxidation, probably by sirT. Further oxidation, methylation (by sirM or sirN) and reduction steps convert phomalizarine to deacetyl sirodesmin. Finally, acetyltransferase sirH probably acetylates deacetyl sirodesmin to produce sirodesmin PL. The polypeptide is Cytochrome P450 monooxygenase sirB (Leptosphaeria maculans (Blackleg fungus)).